We begin with the raw amino-acid sequence, 317 residues long: Polysulfide reductase chain C (317 aa).

8 helical membrane-spanning segments follow: residues 20 to 40 (IAVYLFLAGLSAGAIISAIII), 54 to 75 (IIKAGALIAPLTIGAGLLLLIF), 98 to 118 (LGVLALFAYFPVVLIFLLGVF), 147 to 167 (IVTFVLAIGVGAYTGFLLSAM), 182 to 202 (FLASGISAGISGNLLIGLLFF), 221 to 237 (VILFEAFLLFILFVGMY), 259 to 279 (LFWLGVAGMGLALPVVLNVAL), and 289 to 309 (FVMLNALIVLAGVMALRFYIL).

The protein belongs to the NrfD family. As to quaternary structure, functional polysulfide reductase is made up of three different (A, B, and C) subunits.

The protein resides in the cell inner membrane. In terms of biological role, could possibly serve as the membrane anchor of the enzyme. Functionally, component of the phosphorylative electron transport system with polysulfide as the terminal acceptor. In Wolinella succinogenes (strain ATCC 29543 / DSM 1740 / CCUG 13145 / JCM 31913 / LMG 7466 / NCTC 11488 / FDC 602W) (Vibrio succinogenes), this protein is Polysulfide reductase chain C (psrC).